An 888-amino-acid polypeptide reads, in one-letter code: uncharacterized protein (888 aa).

The first 20 residues, 1–20 (MKILKSLVLLVLFIVMPAKA), serve as a signal peptide directing secretion. 6 helical membrane-spanning segments follow: residues 513-533 (IVKA…VAGA), 565-585 (TYFF…VVGA), 611-631 (LLFI…IITI), 649-669 (VIAF…IILM), 682-702 (ISTL…FLLI), and 781-801 (LLFY…NIVV).

The protein belongs to the TrbL/VirB6 family.

The protein localises to the cell membrane. This is an uncharacterized protein from Rickettsia prowazekii (strain Madrid E).